A 108-amino-acid chain; its full sequence is Putative double-stranded DNA mimic protein PBPRA1522 (108 aa).

Belongs to the putative dsDNA mimic protein family.

Its function is as follows. May act as a double-stranded DNA (dsDNA) mimic. Probably regulates the activity of a dsDNA-binding protein. The sequence is that of Putative double-stranded DNA mimic protein PBPRA1522 from Photobacterium profundum (strain SS9).